A 154-amino-acid polypeptide reads, in one-letter code: 3-hydroxyacyl-[acyl-carrier-protein] dehydratase FabZ (154 aa).

The active site involves H60.

This sequence belongs to the thioester dehydratase family. FabZ subfamily.

The protein resides in the cytoplasm. It carries out the reaction a (3R)-hydroxyacyl-[ACP] = a (2E)-enoyl-[ACP] + H2O. Involved in unsaturated fatty acids biosynthesis. Catalyzes the dehydration of short chain beta-hydroxyacyl-ACPs and long chain saturated and unsaturated beta-hydroxyacyl-ACPs. The protein is 3-hydroxyacyl-[acyl-carrier-protein] dehydratase FabZ of Synechococcus sp. (strain CC9311).